The chain runs to 58 residues: Small ribosomal subunit protein bS21 (58 aa).

The protein belongs to the bacterial ribosomal protein bS21 family.

This Prochlorococcus marinus (strain MIT 9301) protein is Small ribosomal subunit protein bS21.